A 207-amino-acid polypeptide reads, in one-letter code: Cytochrome c biogenesis ATP-binding export protein CcmA (207 aa).

The ABC transporter domain maps to Leu-4–Ala-207. Residue Gly-36–Thr-43 participates in ATP binding.

Belongs to the ABC transporter superfamily. CcmA exporter (TC 3.A.1.107) family. In terms of assembly, the complex is composed of two ATP-binding proteins (CcmA) and two transmembrane proteins (CcmB).

It is found in the cell inner membrane. It catalyses the reaction heme b(in) + ATP + H2O = heme b(out) + ADP + phosphate + H(+). In terms of biological role, part of the ABC transporter complex CcmAB involved in the biogenesis of c-type cytochromes; once thought to export heme, this seems not to be the case, but its exact role is uncertain. Responsible for energy coupling to the transport system. The chain is Cytochrome c biogenesis ATP-binding export protein CcmA from Shigella boydii serotype 4 (strain Sb227).